The sequence spans 643 residues: Threonine--tRNA ligase (643 aa).

The 62-residue stretch at 1-62 (MSFSVTLPDG…DEDVEAAIIT (62 aa)) folds into the TGS domain. The catalytic stretch occupies residues 239-537 (DHRTIGRDLD…LTEIYKGAFP (299 aa)). Zn(2+) contacts are provided by Cys333, His384, and His514.

It belongs to the class-II aminoacyl-tRNA synthetase family. In terms of assembly, homodimer. The cofactor is Zn(2+).

The protein resides in the cytoplasm. It catalyses the reaction tRNA(Thr) + L-threonine + ATP = L-threonyl-tRNA(Thr) + AMP + diphosphate + H(+). In terms of biological role, catalyzes the attachment of threonine to tRNA(Thr) in a two-step reaction: L-threonine is first activated by ATP to form Thr-AMP and then transferred to the acceptor end of tRNA(Thr). Also edits incorrectly charged L-seryl-tRNA(Thr). The sequence is that of Threonine--tRNA ligase from Lactobacillus gasseri (strain ATCC 33323 / DSM 20243 / BCRC 14619 / CIP 102991 / JCM 1131 / KCTC 3163 / NCIMB 11718 / NCTC 13722 / AM63).